Here is a 228-residue protein sequence, read N- to C-terminus: Cytidylate kinase (228 aa).

An ATP-binding site is contributed by 17–25; it reads GPTASGKGT.

The protein belongs to the cytidylate kinase family. Type 1 subfamily.

Its subcellular location is the cytoplasm. It carries out the reaction CMP + ATP = CDP + ADP. The enzyme catalyses dCMP + ATP = dCDP + ADP. The polypeptide is Cytidylate kinase (Burkholderia mallei (strain NCTC 10247)).